We begin with the raw amino-acid sequence, 151 residues long: Small ribosomal subunit protein uS15 (151 aa).

The disordered stretch occupies residues M1–T20.

The protein belongs to the universal ribosomal protein uS15 family. In terms of assembly, part of the 30S ribosomal subunit.

This chain is Small ribosomal subunit protein uS15, found in Methanococcus maripaludis (strain C5 / ATCC BAA-1333).